Here is a 105-residue protein sequence, read N- to C-terminus: Putative membrane protein insertion efficiency factor (105 aa).

The disordered stretch occupies residues 68–105 (FHPGGLDPVPPRRNESGTEISDARPGSDGEASPGAPGL). Residues 77-94 (PPRRNESGTEISDARPGS) show a composition bias toward basic and acidic residues.

This sequence belongs to the UPF0161 family.

The protein localises to the cell membrane. Could be involved in insertion of integral membrane proteins into the membrane. The chain is Putative membrane protein insertion efficiency factor from Thermobifida fusca (strain YX).